Consider the following 670-residue polypeptide: DUF724 domain-containing protein 1 (670 aa).

2 disordered regions span residues 283 to 315 and 368 to 445; these read HNGPQQKPVKESPSNAIKQKPMCSSSGARPMTP and ANAE…NNDD. 3 stretches are compositionally biased toward polar residues: residues 294–309, 379–392, and 426–442; these read SPSNAIKQKPMCSSSG, RNQNCLRNDSTQQM, and CNGSESEISNTGKSICN. In terms of domain architecture, DUF724 spans 484–669; the sequence is PFAKKLPFWK…LEFQTTVSTP (186 aa).

In terms of tissue distribution, expressed in stems and flowers.

The protein localises to the nucleus. In terms of biological role, may be involved in the polar growth of plant cells via transportation of RNAs. The chain is DUF724 domain-containing protein 1 from Arabidopsis thaliana (Mouse-ear cress).